Reading from the N-terminus, the 93-residue chain is Small ribosomal subunit protein uS19 (93 aa).

It belongs to the universal ribosomal protein uS19 family.

In terms of biological role, protein S19 forms a complex with S13 that binds strongly to the 16S ribosomal RNA. The polypeptide is Small ribosomal subunit protein uS19 (Oenococcus oeni (strain ATCC BAA-331 / PSU-1)).